The chain runs to 169 residues: TPD1 protein homolog 1B (169 aa).

An N-terminal signal peptide occupies residues 1 to 25 (MADCTTMRLASSVTIILLLLVASQA).

In terms of tissue distribution, expressed in roots, and at low levels in anthers during meiosis.

May play a role during anther development. This Oryza sativa subsp. japonica (Rice) protein is TPD1 protein homolog 1B.